The chain runs to 309 residues: Oxygen-dependent coproporphyrinogen-III oxidase (309 aa).

Serine 94 lines the substrate pocket. Residues histidine 98 and histidine 108 each coordinate a divalent metal cation. Histidine 108 acts as the Proton donor in catalysis. Residue 110–112 participates in substrate binding; sequence NVR. 2 residues coordinate a divalent metal cation: histidine 147 and histidine 177. The tract at residues 242–277 is important for dimerization; the sequence is YVEFNLVWDRGTLFGLQTGGRTESILMSLPPLVRWE. Substrate is bound at residue 260-262; it reads GGR.

Belongs to the aerobic coproporphyrinogen-III oxidase family. In terms of assembly, homodimer. A divalent metal cation is required as a cofactor.

It localises to the cytoplasm. It carries out the reaction coproporphyrinogen III + O2 + 2 H(+) = protoporphyrinogen IX + 2 CO2 + 2 H2O. It functions in the pathway porphyrin-containing compound metabolism; protoporphyrin-IX biosynthesis; protoporphyrinogen-IX from coproporphyrinogen-III (O2 route): step 1/1. Functionally, involved in the heme biosynthesis. Catalyzes the aerobic oxidative decarboxylation of propionate groups of rings A and B of coproporphyrinogen-III to yield the vinyl groups in protoporphyrinogen-IX. The chain is Oxygen-dependent coproporphyrinogen-III oxidase from Yersinia pseudotuberculosis serotype O:1b (strain IP 31758).